A 188-amino-acid polypeptide reads, in one-letter code: Elongation factor P (188 aa).

Lys-34 is modified (N6-(3,6-diaminohexanoyl)-5-hydroxylysine).

Belongs to the elongation factor P family. May be beta-lysylated on the epsilon-amino group of Lys-34 by the combined action of EpmA and EpmB, and then hydroxylated on the C5 position of the same residue by EpmC (if this protein is present). Lysylation is critical for the stimulatory effect of EF-P on peptide-bond formation. The lysylation moiety may extend toward the peptidyltransferase center and stabilize the terminal 3-CCA end of the tRNA. Hydroxylation of the C5 position on Lys-34 may allow additional potential stabilizing hydrogen-bond interactions with the P-tRNA.

It is found in the cytoplasm. The protein operates within protein biosynthesis; polypeptide chain elongation. Its function is as follows. Involved in peptide bond synthesis. Alleviates ribosome stalling that occurs when 3 or more consecutive Pro residues or the sequence PPG is present in a protein, possibly by augmenting the peptidyl transferase activity of the ribosome. Modification of Lys-34 is required for alleviation. The polypeptide is Elongation factor P (Pectobacterium atrosepticum (strain SCRI 1043 / ATCC BAA-672) (Erwinia carotovora subsp. atroseptica)).